Consider the following 233-residue polypeptide: LexA repressor (233 aa).

Residues 26 to 46 (FEEMKEALDLKSKSGVHRLIS) constitute a DNA-binding region (H-T-H motif). Catalysis depends on for autocatalytic cleavage activity residues serine 153 and lysine 191.

It belongs to the peptidase S24 family. In terms of assembly, homodimer.

It carries out the reaction Hydrolysis of Ala-|-Gly bond in repressor LexA.. Functionally, represses a number of genes involved in the response to DNA damage (SOS response), including recA and lexA. In the presence of single-stranded DNA, RecA interacts with LexA causing an autocatalytic cleavage which disrupts the DNA-binding part of LexA, leading to derepression of the SOS regulon and eventually DNA repair. In Erythrobacter litoralis (strain HTCC2594), this protein is LexA repressor.